We begin with the raw amino-acid sequence, 332 residues long: Invasin IpaD (332 aa).

The segment covering 1-25 has biased composition (low complexity); sequence MNITTLTNSISTSSFSPNNTNGSST. The disordered stretch occupies residues 1-43; sequence MNITTLTNSISTSSFSPNNTNGSSTETVNSDIKTTTSSHPVSS. Residues 26-43 are compositionally biased toward polar residues; the sequence is ETVNSDIKTTTSSHPVSS. Positions 44–77 form a coiled coil; sequence LTMLNDTLHNIRTTNQALKKELSQKTLTKTSLEE. The interval 192–267 is ipaB binding; it reads VKSLKDALTT…NRLDNLGGNG (76 aa).

It belongs to the invasin protein D family.

The protein localises to the secreted. Functionally, required for bacterial invasion of host cells. Controls IpaB and IpaC secretion, and the efficiency with which they are physically inserted into target cell membranes. These proteins are exported via T3SS to form a pore in the host membrane that allows the translocation of the other effectors into the host cytoplasm. Along with IpaB, is essential for both blocking secretion through the Mxi/Spa translocon in the absence of a secretion-inducing signal, and for controlling the level of secretion in the presence of this signal. The protein is Invasin IpaD (ipaD) of Shigella dysenteriae.